The primary structure comprises 213 residues: Cytochrome c biogenesis ATP-binding export protein CcmA (213 aa).

One can recognise an ABC transporter domain in the interval 7–213; that stretch reads LKTKKLACQR…VRLENYKFTE (207 aa). 39-46 is an ATP binding site; it reads GHNGIGKT.

The protein belongs to the ABC transporter superfamily. CcmA exporter (TC 3.A.1.107) family. In terms of assembly, the complex is composed of two ATP-binding proteins (CcmA) and two transmembrane proteins (CcmB).

The protein localises to the cell inner membrane. It catalyses the reaction heme b(in) + ATP + H2O = heme b(out) + ADP + phosphate + H(+). Functionally, part of the ABC transporter complex CcmAB involved in the biogenesis of c-type cytochromes; once thought to export heme, this seems not to be the case, but its exact role is uncertain. Responsible for energy coupling to the transport system. The sequence is that of Cytochrome c biogenesis ATP-binding export protein CcmA from Pasteurella multocida (strain Pm70).